The sequence spans 321 residues: G-protein coupled receptor homolog ECRF3 (321 aa).

Residues 1 to 34 are Extracellular-facing; the sequence is MEVKLDFSSEDFSNYSYNYSGDIYYGDVAPCVVN. N-linked (GlcNAc...) asparagine; by host glycans are attached at residues N14 and N18. The helical transmembrane segment at 35 to 51 threads the bilayer; it reads FLISESALAFIYVLMFL. Topologically, residues 52-76 are cytoplasmic; the sequence is CNAIGNSLVLRTFLKYRAQAQSFDY. Residues 77 to 93 form a helical membrane-spanning segment; that stretch reads LMMGFCLNSLFLAGYLL. Topologically, residues 94–124 are extracellular; sequence MRLLRMFEIFMNTELCKLEAFFLNLSIYWSP. N117 is a glycosylation site (N-linked (GlcNAc...) asparagine; by host). Residues 125–141 traverse the membrane as a helical segment; that stretch reads FILVFISVLRCLLIFCA. Topologically, residues 142–149 are cytoplasmic; sequence TRLWVKKT. The chain crosses the membrane as a helical span at residues 150 to 166; the sequence is LIGQVFLCCSFVLACFG. Residues 167–196 lie on the Extracellular side of the membrane; that stretch reads ALPHVMVTSYYEPSSCIEEDGVLTEQLRTK. A helical membrane pass occupies residues 197–215; that stretch reads LNTFHTWYSFAGPLFITVI. At 216-234 the chain is on the cytoplasmic side; that stretch reads CYSMSCYKLFKTKLSKRAE. Residues 235–251 traverse the membrane as a helical segment; the sequence is VVTIITMTTLLFIVFCI. Topologically, residues 252 to 286 are extracellular; sequence PYYIMESIDTLLRVGVIEETCAKRSAIVYGIQCTY. Residues 287 to 303 form a helical membrane-spanning segment; sequence MLLVLYYCMLPLMFAMF. The Cytoplasmic segment spans residues 304-321; that stretch reads GSLFRQRMAAWCKTICHC.

This sequence belongs to the G-protein coupled receptor 1 family.

It localises to the host cell membrane. Functionally, may be highly relevant to the process of cellular transformation and rapid T-cell proliferation effected by HVS during latent infections of T-cells in susceptible hosts. This chain is G-protein coupled receptor homolog ECRF3 (74), found in Saimiri sciureus (Common squirrel monkey).